Reading from the N-terminus, the 150-residue chain is FAD synthase (150 aa).

ATP-binding positions include 10–11 (VF), 15–18 (HPGH), Asp-97, and Tyr-124.

Belongs to the archaeal FAD synthase family. In terms of assembly, homodimer. Requires a divalent metal cation as cofactor.

The catalysed reaction is FMN + ATP + H(+) = FAD + diphosphate. It participates in cofactor biosynthesis; FAD biosynthesis; FAD from FMN: step 1/1. Its function is as follows. Catalyzes the transfer of the AMP portion of ATP to flavin mononucleotide (FMN) to produce flavin adenine dinucleotide (FAD) coenzyme. This is FAD synthase from Methanopyrus kandleri (strain AV19 / DSM 6324 / JCM 9639 / NBRC 100938).